The primary structure comprises 32 residues: MSQITTKHITVLFRRWMAIICCLIIKIAYLAY.

The chain is Yop proteins translocation protein A (yscA) from Yersinia enterocolitica serotype O:8 / biotype 1B (strain NCTC 13174 / 8081).